A 344-amino-acid polypeptide reads, in one-letter code: Mycothiol acetyltransferase (344 aa).

1D-myo-inositol 2-(L-cysteinylamino)-2-deoxy-alpha-D-glucopyranoside is bound at residue Glu-36. N-acetyltransferase domains follow at residues 40–179 and 187–344; these read LALR…TPLP and VTVR…PSTG. The segment at 61-83 is disordered; sequence ADTSGPNVPDTPGDQNAADTSTM. Polar residues predominate over residues 73–83; that stretch reads GDQNAADTSTM. Acetyl-CoA is bound at residue 109-111; that stretch reads VVV. Positions 214, 253, and 272 each coordinate 1D-myo-inositol 2-(L-cysteinylamino)-2-deoxy-alpha-D-glucopyranoside. Acetyl-CoA contacts are provided by residues 276–278 and 283–289; these read VGV and GGAGLGR. Residue Tyr-310 participates in 1D-myo-inositol 2-(L-cysteinylamino)-2-deoxy-alpha-D-glucopyranoside binding. Residue 315-320 participates in acetyl-CoA binding; the sequence is NVRAVR.

Belongs to the acetyltransferase family. MshD subfamily. Monomer.

It catalyses the reaction 1D-myo-inositol 2-(L-cysteinylamino)-2-deoxy-alpha-D-glucopyranoside + acetyl-CoA = mycothiol + CoA + H(+). Catalyzes the transfer of acetyl from acetyl-CoA to desacetylmycothiol (Cys-GlcN-Ins) to form mycothiol. In Frankia casuarinae (strain DSM 45818 / CECT 9043 / HFP020203 / CcI3), this protein is Mycothiol acetyltransferase.